The following is a 375-amino-acid chain: LIM domain-binding protein 1 (375 aa).

2 disordered regions span residues 248–294 and 331–375; these read PPAE…TFAL and DAAN…QASQ. A compositionally biased stretch (low complexity) spans 266 to 282; it reads SGGSTMSSGGGNTNNSN. An LIM interaction domain (LID) domain is found at 300–339; the sequence is DVMVVGEPTLMGGEFGDEDERLITRLENTQFDAANGIDDE.

The protein belongs to the LDB family. In terms of assembly, forms homodimers and heterodimers. Interacts with the LIM domain of LIM/homeobox factor lhx1/lim1, and with lhx3/lim3 and lhx5/lim5. Activates lhx1/lim1 by binding. The stoichiometry of lhx1/lim1 and ldb1 is important for their function and an excess of ldb1 can inhibit lhx1/lim1 function. When bound to lhx1/lim1, escapes degradation by rnf12. The N-terminus interacts with the N-terminal region of rnf12. Undergoes rnf12-mediated ubiquitin-proteasome-dependent degradation. In terms of tissue distribution, ubiquitously expressed in the early gastrula before localizing to the dorsal region of the vegetal hemisphere, which contains the Spemann organizer. Expressed in the CNS, pronephros and tail bud in neurula and tail-bud stage embryos. Expressed in multiple adult tissues including brain, heart, lung, stomach, intestine, liver, spleen, kidney, ovary, muscle and skin.

The protein localises to the nucleus. In terms of biological role, binds to the LIM domain of a wide variety of LIM domain-containing transcription factors. Acts as a coactivator together with otx2 to stimulate lhx1/lim1-mediated activation of the gsc promoter in the Spemann organizer. Acts synergistically with lhx1/lim1 and ssbp in axis formation. The chain is LIM domain-binding protein 1 (ldb1) from Xenopus laevis (African clawed frog).